A 470-amino-acid chain; its full sequence is Uronate isomerase (470 aa).

It belongs to the metallo-dependent hydrolases superfamily. Uronate isomerase family.

It catalyses the reaction D-glucuronate = D-fructuronate. It carries out the reaction aldehydo-D-galacturonate = keto-D-tagaturonate. Its pathway is carbohydrate metabolism; pentose and glucuronate interconversion. In Salmonella arizonae (strain ATCC BAA-731 / CDC346-86 / RSK2980), this protein is Uronate isomerase.